We begin with the raw amino-acid sequence, 667 residues long: tRNA 5-methylaminomethyl-2-thiouridine biosynthesis bifunctional protein MnmC (667 aa).

The segment at 1-215 (MKFINGILFN…KREMIRAYFN (215 aa)) is tRNA (mnm(5)s(2)U34)-methyltransferase. The tract at residues 240–667 (IGAGIAGIVT…LIRKLKKGLK (428 aa)) is FAD-dependent cmnm(5)s(2)U34 oxidoreductase.

The protein in the N-terminal section; belongs to the methyltransferase superfamily. tRNA (mnm(5)s(2)U34)-methyltransferase family. This sequence in the C-terminal section; belongs to the DAO family. The cofactor is FAD.

It localises to the cytoplasm. The catalysed reaction is 5-aminomethyl-2-thiouridine(34) in tRNA + S-adenosyl-L-methionine = 5-methylaminomethyl-2-thiouridine(34) in tRNA + S-adenosyl-L-homocysteine + H(+). In terms of biological role, catalyzes the last two steps in the biosynthesis of 5-methylaminomethyl-2-thiouridine (mnm(5)s(2)U) at the wobble position (U34) in tRNA. Catalyzes the FAD-dependent demodification of cmnm(5)s(2)U34 to nm(5)s(2)U34, followed by the transfer of a methyl group from S-adenosyl-L-methionine to nm(5)s(2)U34, to form mnm(5)s(2)U34. The protein is tRNA 5-methylaminomethyl-2-thiouridine biosynthesis bifunctional protein MnmC of Campylobacter hominis (strain ATCC BAA-381 / DSM 21671 / CCUG 45161 / LMG 19568 / NCTC 13146 / CH001A).